A 118-amino-acid polypeptide reads, in one-letter code: Ferredoxin-thioredoxin reductase, catalytic chain (118 aa).

Position 56 (cysteine 56) interacts with [4Fe-4S] cluster. Residue cysteine 58 is the Nucleophile of the active site. Cysteines 58 and 88 form a disulfide. Residues cysteine 75, cysteine 77, and cysteine 86 each coordinate [4Fe-4S] cluster.

It belongs to the ferredoxin thioredoxin reductase beta subunit family. As to quaternary structure, heterodimer of subunit A (variable subunit) and subunit B (catalytic subunit). Heterodimeric FTR forms a complex with ferredoxin and thioredoxin. It depends on [4Fe-4S] cluster as a cofactor.

It catalyses the reaction [thioredoxin]-disulfide + 2 reduced [2Fe-2S]-[ferredoxin] + 2 H(+) = [thioredoxin]-dithiol + 2 oxidized [2Fe-2S]-[ferredoxin]. In terms of biological role, catalytic subunit of the ferredoxin-thioredoxin reductase (FTR), which catalyzes the two-electron reduction of thioredoxins by the electrons provided by reduced ferredoxin. In Synechocystis sp. (strain ATCC 27184 / PCC 6803 / Kazusa), this protein is Ferredoxin-thioredoxin reductase, catalytic chain.